The primary structure comprises 714 residues: Polyribonucleotide nucleotidyltransferase (714 aa).

Residues D488 and D494 each coordinate Mg(2+). The KH domain maps to 555–614; it reads PRIEVMNIPTDKIRDVIGSGGKVIREIVEKTGAKINIEDDGTVKIASSNGKEIEAAKKWI. In terms of domain architecture, S1 motif spans 624-692; it reads GEIYEGTVVK…ERGKVRLSMK (69 aa).

It belongs to the polyribonucleotide nucleotidyltransferase family. The cofactor is Mg(2+).

Its subcellular location is the cytoplasm. The enzyme catalyses RNA(n+1) + phosphate = RNA(n) + a ribonucleoside 5'-diphosphate. In terms of biological role, involved in mRNA degradation. Catalyzes the phosphorolysis of single-stranded polyribonucleotides processively in the 3'- to 5'-direction. This chain is Polyribonucleotide nucleotidyltransferase, found in Brucella ovis (strain ATCC 25840 / 63/290 / NCTC 10512).